Here is a 342-residue protein sequence, read N- to C-terminus: AM-toxin biosynthesis protein 12 (342 aa).

The first 20 residues, 1–20, serve as a signal peptide directing secretion; it reads MSLLITSLAWGALLDPEVSS.

It participates in mycotoxin biosynthesis. In terms of biological role, part of the gene clusters that mediate the biosynthesis of AM-toxins, host-selective toxins (HSTs) causing Alternaria blotch on apple, a worldwide distributed disease. AM-toxins are cyclic depsipeptides containing the 3 residues 2-hydroxy-isovaleric acid (2-HIV), dehydroalanine, L-alanine which are common for all 3 AM-toxins I to III. The fourth precursor is L-alpha-amino-methoxyphenyl-valeric acid (L-Amv) for AM-toxin I, L-alpha-amino-phenyl-valeric acid (L-Apv) for AM-toxin II, and L-alpha-amino-hydroxyphenyl-valeric acid (L-Ahv) for AM-toxin III. AM-toxins have two target sites for affecting susceptible apple cells; they cause invagination of the plasma membrane and electrolyte loss and chloroplast disorganization. The non-ribosomal peptide synthetase AMT1 contains 4 catalytic modules and is responsible for activation of each residue in AM-toxin. The aldo-keto reductase AMT2 catalyzes the conversion of 2-keto-isovaleric acid (2-KIV) to 2-hydroxy-isovaleric acid (2-HIV), one of the precursor residues incorporated by AMT1 during AM-toxin biosynthesis, by reduction of its ketone to an alcohol. The cytochrome P450 monooxygenase AMT3 and the thioesterase AMT4 are also important for AM-toxin production, but their exact function within the AM-toxin biosynthesis are not known yet. Up to 21 proteins (including AMT1 to AMT4) are predicted to be involved in AM-toxin biosynthesis since their expression ishighly up-regulated in AM-toxin-producing cultures. The polypeptide is AM-toxin biosynthesis protein 12 (Alternaria alternata (Alternaria rot fungus)).